A 204-amino-acid chain; its full sequence is MAKMYGKGKTAIESEELQKRRWQIELEFVQCLSNPNYLNFLAQRGFFKDQSFINYLKYLQYWKEPDYAKYLMYPMCLYFLDLLQYEHFRREIVNSQCCKFIDDQAILQWQHYTRKRIKLIENVTAAQQQQQQLQQQQQQANGMEAATGGESAAPTPNVNGSASTADSQQTSSALQPVQAQPGNPQQQQQINGVASGANIKLELN.

The interval 134 to 204 (QQQQQQANGM…SGANIKLELN (71 aa)) is disordered. A compositionally biased stretch (low complexity) spans 161–194 (SASTADSQQTSSALQPVQAQPGNPQQQQQINGVA).

The protein belongs to the Mediator complex subunit 31 family. As to quaternary structure, component of the Mediator complex, which includes at least MED4, MED6, MED14, MED17, MED18, MED20, MED21, MED23, MED24, MED27, MED30 and MED31.

It localises to the nucleus. Component of the Mediator complex, a coactivator involved in the regulated transcription of nearly all RNA polymerase II-dependent genes. Mediator functions as a bridge to convey information from gene-specific regulatory proteins to the basal RNA polymerase II transcription machinery. Mediator is recruited to promoters by direct interactions with regulatory proteins and serves as a scaffold for the assembly of a functional preinitiation complex with RNA polymerase II and the general transcription factors. Required for activated transcription of the MtnA gene. In Drosophila melanogaster (Fruit fly), this protein is Mediator of RNA polymerase II transcription subunit 31 (MED31).